Consider the following 247-residue polypeptide: DNA-directed RNA polymerase subunit Rpo3 (247 aa).

The protein belongs to the archaeal Rpo3/eukaryotic RPB3 RNA polymerase subunit family. Part of the RNA polymerase complex.

It is found in the cytoplasm. The enzyme catalyses RNA(n) + a ribonucleoside 5'-triphosphate = RNA(n+1) + diphosphate. Its function is as follows. DNA-dependent RNA polymerase (RNAP) catalyzes the transcription of DNA into RNA using the four ribonucleoside triphosphates as substrates. The chain is DNA-directed RNA polymerase subunit Rpo3 from Natronomonas pharaonis (strain ATCC 35678 / DSM 2160 / CIP 103997 / JCM 8858 / NBRC 14720 / NCIMB 2260 / Gabara) (Halobacterium pharaonis).